A 578-amino-acid polypeptide reads, in one-letter code: Arginine--tRNA ligase (578 aa).

Positions 127–137 (PNLAKEMHVGH) match the 'HIGH' region motif.

The protein belongs to the class-I aminoacyl-tRNA synthetase family. As to quaternary structure, monomer.

It localises to the cytoplasm. It carries out the reaction tRNA(Arg) + L-arginine + ATP = L-arginyl-tRNA(Arg) + AMP + diphosphate. The protein is Arginine--tRNA ligase of Pseudomonas syringae pv. tomato (strain ATCC BAA-871 / DC3000).